The primary structure comprises 166 residues: Ribosome maturation factor RimM (166 aa).

In terms of domain architecture, PRC barrel spans 94 to 165; that stretch reads EGEYYLGKLI…TIELKVLDLL (72 aa).

It belongs to the RimM family. In terms of assembly, binds ribosomal protein uS19.

It is found in the cytoplasm. In terms of biological role, an accessory protein needed during the final step in the assembly of 30S ribosomal subunit, possibly for assembly of the head region. Essential for efficient processing of 16S rRNA. May be needed both before and after RbfA during the maturation of 16S rRNA. It has affinity for free ribosomal 30S subunits but not for 70S ribosomes. The protein is Ribosome maturation factor RimM of Borrelia garinii subsp. bavariensis (strain ATCC BAA-2496 / DSM 23469 / PBi) (Borreliella bavariensis).